Consider the following 107-residue polypeptide: MMKVLVVVALLVTLISYSSSEGIDDLEADELLSLMANEQTRKECIPKHHECTSNKHGCCRGNFFKYKCQCTTVVTQDGEQTERCFCGTPPHHKAAELVVGFGRKIFG.

An N-terminal signal peptide occupies residues 1–20 (MMKVLVVVALLVTLISYSSS). The propeptide occupies 21-41 (EGIDDLEADELLSLMANEQTR). 4 disulfide bridges follow: Cys-44–Cys-59, Cys-51–Cys-68, Cys-58–Cys-86, and Cys-70–Cys-84.

The protein belongs to the neurotoxin 19 (CSTX) family. 04 (U1-Lctx) subfamily. In terms of tissue distribution, expressed by the venom gland.

It is found in the secreted. This Lycosa singoriensis (Wolf spider) protein is U1-lycotoxin-Ls1d.